The chain runs to 415 residues: MNLNDTFAAVQAAGRHLALLPDDRINQILNAVAEAALEQTSYILSENRKDLERMSPDNPKYDRLRLTEERLRGIASDIRNVATLPSPLGRILKESIRPNGMRLTKISVPFGVIGIIYEARPNVSFDVFSLCLKSGNACILKGGSDADYSNRAIVEVIHQVLRQFNIDTHMVELLPADREATRELLHATGYVDLIIPRGSSALINFVRQNATIPVIETGAGICHTYFDEYGDTAKGAAIIHNAKTRRVSVCNALDCVIVHESRLSDLPLLCEKLKADKVIIYADPSAYQALEGHYPAGLLKPATPESFGTEFLDYKMAIKTVNSFENALGHIQEYSSRHSESIVTENPERAALFTRMVDAACVYTNVSTAFTDGAQFGLGAEIGISTQKLHARGPMGLEEITSYKWIIEGDGQTRQ.

Belongs to the gamma-glutamyl phosphate reductase family.

The protein localises to the cytoplasm. It carries out the reaction L-glutamate 5-semialdehyde + phosphate + NADP(+) = L-glutamyl 5-phosphate + NADPH + H(+). It functions in the pathway amino-acid biosynthesis; L-proline biosynthesis; L-glutamate 5-semialdehyde from L-glutamate: step 2/2. Catalyzes the NADPH-dependent reduction of L-glutamate 5-phosphate into L-glutamate 5-semialdehyde and phosphate. The product spontaneously undergoes cyclization to form 1-pyrroline-5-carboxylate. This chain is Gamma-glutamyl phosphate reductase, found in Bacteroides fragilis (strain YCH46).